A 445-amino-acid polypeptide reads, in one-letter code: UPF0210 protein STK_02450 (445 aa).

The protein belongs to the UPF0210 family.

This Sulfurisphaera tokodaii (strain DSM 16993 / JCM 10545 / NBRC 100140 / 7) (Sulfolobus tokodaii) protein is UPF0210 protein STK_02450.